The following is a 249-amino-acid chain: Uridylate kinase (249 aa).

21–24 (KLSG) is a binding site for ATP. Residue Gly-63 coordinates UMP. Residues Gly-64 and Arg-68 each contribute to the ATP site. UMP is bound by residues Asp-84 and 145–152 (TGNPFVTT). ATP contacts are provided by Thr-172, Tyr-178, and Asp-181.

It belongs to the UMP kinase family. Homohexamer.

It is found in the cytoplasm. The enzyme catalyses UMP + ATP = UDP + ADP. The protein operates within pyrimidine metabolism; CTP biosynthesis via de novo pathway; UDP from UMP (UMPK route): step 1/1. Inhibited by UTP. Functionally, catalyzes the reversible phosphorylation of UMP to UDP. This is Uridylate kinase from Francisella tularensis subsp. tularensis (strain FSC 198).